A 1142-amino-acid chain; its full sequence is E3 ubiquitin-protein ligase TRIM33 (1142 aa).

Residues 1–18 show a composition bias toward gly residues; sequence MAENKGGGEAESGGGGSG. The segment at 1–132 is disordered; the sequence is MAENKGGGEA…PGSSSGPPLG (132 aa). The tract at residues 1–163 is necessary for E3 ubiquitin-protein ligase activity and repression of SMAD4 signaling and transcriptional repression; the sequence is MAENKGGGEA…AEPKLLPCLH (163 aa). The span at 19-42 shows a compositional bias: low complexity; the sequence is SAPVTAGAAGPTAQEAEPPLAAVL. Residues 52–64 are compositionally biased toward gly residues; it reads RAGAEGGAAGPDD. Residues 65–99 show a composition bias toward low complexity; it reads GGVAAASSSSAPAASVPAASVGSAVPGGAASTPAP. Residues 100–122 show a composition bias toward pro residues; sequence AAAPAPAPAPAPAPAPAPAPAPA. The RING-type zinc finger occupies 141-201; that stretch reads CAVCQQSLQS…VGVIRCPVCR (61 aa). 2 consecutive B box-type zinc fingers follow at residues 228 to 275 and 287 to 328; these read KSEQ…IRKK and QRPV…YQFL. Residues Cys233, Cys236, Cys257, His261, Cys292, His295, Cys315, and His320 each contribute to the Zn(2+) site. The interval 315 to 417 is necessary for oligomerization; that stretch reads CQLLEHKEHR…QMKLLQQQND (103 aa). Residues 315 to 417 are a coiled coil; that stretch reads CQLLEHKEHR…QMKLLQQQND (103 aa). Residues Lys345, Lys350, Lys497, and Lys520 each participate in a glycyl lysine isopeptide (Lys-Gly) (interchain with G-Cter in SUMO2) cross-link. Asymmetric dimethylarginine; alternate is present on Arg531. At Arg531 the chain carries Omega-N-methylarginine; alternate. Residue Lys543 forms a Glycyl lysine isopeptide (Lys-Gly) (interchain with G-Cter in SUMO2) linkage. Arg551 carries the post-translational modification Omega-N-methylarginine. Arg593 bears the Asymmetric dimethylarginine mark. The residue at position 607 (Arg607) is an Asymmetric dimethylarginine; alternate. An Omega-N-methylarginine; alternate modification is found at Arg607. An asymmetric dimethylarginine mark is found at Arg614 and Arg620. 3 disordered regions span residues 657–676, 688–707, and 718–834; these read PTSPTTATMANANRGPTSPS, NPENLPSLPDIPPIQLEDAG, and YISG…PPLS. Over residues 738 to 774 the composition is skewed to low complexity; that stretch reads PSALSPGSSGLSNSHTPVRPPSTSSTGSRGSCGSSGR. Basic and acidic residues-rich tracts occupy residues 775–794 and 808–817; these read TAEKSAHSFKSDQVKVKQEP and KQEKTEDGRR. Residues Lys778 and Lys784 each carry the N6-acetyllysine; alternate modification. Glycyl lysine isopeptide (Lys-Gly) (interchain with G-Cter in SUMO2); alternate cross-links involve residues Lys778 and Lys784. Lys789 is covalently cross-linked (Glycyl lysine isopeptide (Lys-Gly) (interchain with G-Cter in SUMO2)). Glycyl lysine isopeptide (Lys-Gly) (interchain with G-Cter in SUMO2); alternate cross-links involve residues Lys791 and Lys808. Glycyl lysine isopeptide (Lys-Gly) (interchain with G-Cter in SUMO1); alternate cross-links involve residues Lys791 and Lys808. At Lys808 the chain carries N6-acetyllysine; alternate. Lys811 participates in a covalent cross-link: Glycyl lysine isopeptide (Lys-Gly) (interchain with G-Cter in SUMO2). Ser818 carries the post-translational modification Phosphoserine. The segment covering 822–834 has biased composition (low complexity); that stretch reads LSSPESSLTPPLS. Thr830 bears the Phosphothreonine mark. A Glycyl lysine isopeptide (Lys-Gly) (interchain with G-Cter in SUMO2) cross-link involves residue Lys876. Ser877 is modified (phosphoserine). The PHD-type zinc-finger motif lies at 902-949; that stretch reads EDWCAVCQNGGDLLCCEKCPKVFHLTCHVPTLLSFPSGDWICTFCRDI. The residue at position 966 (Lys966) is an N6-acetyllysine. Lys968 is subject to N6-acetyllysine; alternate. Residue Lys968 forms a Glycyl lysine isopeptide (Lys-Gly) (interchain with G-Cter in SUMO2); alternate linkage. The Bromo domain occupies 972–1095; that stretch reads GLSPVDQRKC…LYFEDKLSEI (124 aa). Residues Lys1022 and Lys1058 each participate in a glycyl lysine isopeptide (Lys-Gly) (interchain with G-Cter in SUMO2) cross-link. Thr1066 carries the phosphothreonine modification. Residue Lys1072 forms a Glycyl lysine isopeptide (Lys-Gly) (interchain with G-Cter in SUMO2) linkage. The segment at 1103–1142 is disordered; the sequence is PLPEFEQDEDDGEVTEDSDEDFIQPRRKRLKSDERPVHIK. A compositionally biased stretch (acidic residues) spans 1107 to 1124; sequence FEQDEDDGEVTEDSDEDF. A Phosphothreonine modification is found at Thr1117. Ser1120 bears the Phosphoserine mark. A Glycyl lysine isopeptide (Lys-Gly) (interchain with G-Cter in SUMO2) cross-link involves residue Lys1133. Residues 1133–1142 show a composition bias toward basic and acidic residues; the sequence is KSDERPVHIK. Ser1134 carries the post-translational modification Phosphoserine.

It belongs to the TRIM/RBCC family. As to quaternary structure, homooligomer and heterooligomer with TRIM24 and TRIM28 family members. Interacts with SMAD4 in unstimulated cells. Found in a complex with SMAD2 and SMAD3 upon addition of TGF-beta. Interacts with SMAD2 and SMAD3. Interacts with SMAD4 under basal and induced conditions and, upon TGF-beta signaling, with activated SMAD2. Forms a ternary complex with SMAD4 and SMAD2 upon TGF-beta signaling. Post-translationally, sumoylated with SUMO1. In terms of tissue distribution, ubiquitous with high level in testis.

The protein resides in the nucleus. It catalyses the reaction S-ubiquitinyl-[E2 ubiquitin-conjugating enzyme]-L-cysteine + [acceptor protein]-L-lysine = [E2 ubiquitin-conjugating enzyme]-L-cysteine + N(6)-ubiquitinyl-[acceptor protein]-L-lysine.. It participates in protein modification; protein ubiquitination. Functionally, acts as an E3 ubiquitin-protein ligase. Promotes SMAD4 ubiquitination, nuclear exclusion and degradation via the ubiquitin proteasome pathway. May act as a transcriptional repressor. Inhibits the transcriptional response to TGF-beta/BMP signaling cascade. Plays a role in the control of cell proliferation. Its association with SMAD2 and SMAD3 stimulates erythroid differentiation of hematopoietic stem/progenitor. Monoubiquitinates SMAD4 and acts as an inhibitor of SMAD4-dependent TGF-beta/BMP signaling cascade (Monoubiquitination of SMAD4 hampers its ability to form a stable complex with activated SMAD2/3 resulting in inhibition of TGF-beta/BMP signaling cascade). This Mus musculus (Mouse) protein is E3 ubiquitin-protein ligase TRIM33 (Trim33).